The sequence spans 1087 residues: Formin-H (1087 aa).

The segment covering 1 to 23 (MSFDLESNSSGGSTIGRNSSIRL) has biased composition (polar residues). The disordered stretch occupies residues 1 to 25 (MSFDLESNSSGGSTIGRNSSIRLSS). A GBD/FH3 domain is found at 34-394 (VSLNEIIDLD…QLEDELKIHP (361 aa)). Low complexity-rich tracts occupy residues 416 to 436 (FGFGSKSKSPSSSPALSSMAK) and 549 to 558 (SPGSTLSPSP). Disordered regions lie at residues 416–445 (FGFGSKSKSPSSSPALSSMAKTELKKDNEE), 549–625 (SPGS…PAKP), and 1048–1087 (VDSLRKNLKSTSTTTPNTPPTIKIELPSQSILKPSGQLKK). Residues 433 to 461 (SMAKTELKKDNEEKQKTIEHLLKQLNKFS) are a coiled coil. The segment covering 569–588 (FGITSSSIHTSTDKLTNSTE) has biased composition (polar residues). In terms of domain architecture, FH1 spans 589–615 (PILGSPPPPPPPPMSGGGGPPPPPPPP). A compositionally biased stretch (pro residues) spans 592 to 616 (GSPPPPPPPPMSGGGGPPPPPPPPG). Positions 623–1016 (AKPIIKPSVK…ENSKMEDPEK (394 aa)) constitute an FH2 domain. The 39-residue stretch at 1013 to 1051 (DPEKGGLQDLSSQIRSGQLFKDRRVGDSVIAQMQNVDSL) folds into the DAD domain.

This sequence belongs to the formin homology family. Diaphanous subfamily. In terms of assembly, interacts with vasP, proB/profilin-2 and rac1A. Interacts (via GBD/FH3 domain) with activated Rho-GTPases.

It localises to the cytoplasm. Its subcellular location is the cell cortex. It is found in the cytoskeleton. Formins play an important role in the nucleation of actin and the formation of linear actin filaments. Important for cell migration and formation, elongation and maintenance of filopodia. Specifically controls filopodial dynamics by regulating actin turnover at the barbed ends of actin filaments. This Dictyostelium discoideum (Social amoeba) protein is Formin-H (forH).